The sequence spans 59 residues: Large ribosomal subunit protein bL35 (59 aa).

The segment covering 17 to 43 (GQIKRKHAYTSHLAPHKSTKQKRHLRK) has biased composition (basic residues). The disordered stretch occupies residues 17 to 47 (GQIKRKHAYTSHLAPHKSTKQKRHLRKQATV).

Belongs to the bacterial ribosomal protein bL35 family.

The chain is Large ribosomal subunit protein bL35 from Mycoplasma genitalium (strain ATCC 33530 / DSM 19775 / NCTC 10195 / G37) (Mycoplasmoides genitalium).